The primary structure comprises 267 residues: Undecaprenyl-diphosphatase (267 aa).

7 helical membrane-spanning segments follow: residues 4-24 (LYAL…ISST), 41-61 (FWKS…IFVF), 69-89 (LDIW…GLFV), 96-116 (LFNG…FILI), 173-193 (AAEF…AYSI), 207-227 (IPLG…IKFF), and 239-259 (FGIY…SGIL).

Belongs to the UppP family.

It is found in the cell inner membrane. It carries out the reaction di-trans,octa-cis-undecaprenyl diphosphate + H2O = di-trans,octa-cis-undecaprenyl phosphate + phosphate + H(+). Its function is as follows. Catalyzes the dephosphorylation of undecaprenyl diphosphate (UPP). Confers resistance to bacitracin. This is Undecaprenyl-diphosphatase from Campylobacter jejuni subsp. jejuni serotype O:23/36 (strain 81-176).